The primary structure comprises 117 residues: Putative small ubiquitin-related modifier 6 (117 aa).

Residues 1–30 form a disordered region; sequence MSTKSSSIHGRNEVKMEGEKRKDVESESTH. Positions 10-28 are enriched in basic and acidic residues; sequence GRNEVKMEGEKRKDVESES. One can recognise a Ubiquitin-like domain in the interval 31 to 108; it reads VTLNVKGQDE…IDALLPQESG (78 aa). Residue G108 forms a Glycyl lysine isopeptide (Gly-Lys) (interchain with K-? in acceptor proteins) linkage.

This sequence belongs to the ubiquitin family. SUMO subfamily. As to quaternary structure, interacts with SAE2, SCE1, SIZ1 and MMS21 Covalently attached to a number of proteins.

The protein resides in the nucleus. The protein localises to the cytoplasm. Its function is as follows. Ubiquitin-like protein which can be covalently attached to target lysines as a monomer. Does not seem to be involved in protein degradation and may function as an antagonist of ubiquitin in the degradation process. The protein is Putative small ubiquitin-related modifier 6 (SUMO6) of Arabidopsis thaliana (Mouse-ear cress).